A 1146-amino-acid chain; its full sequence is Elicitor of plant defense protein 1 (1146 aa).

Disordered stretches follow at residues 25–75 (DPLP…RLSN) and 156–226 (ARPP…PRQG). A compositionally biased stretch (basic and acidic residues) spans 164–177 (RAERIKAEDSDQSG). A uDENN domain is found at 246-500 (PLNTDPNMHP…NLCTEAFSPL (255 aa)). The cDENN domain maps to 522–656 (VNEIPGSRTI…HRRKLHALLQ (135 aa)). A dDENN domain is found at 658–1016 (AAPAKLRYGV…ERETKPGTTA (359 aa)). The interval 730-806 (LHSKVDPNKP…RRSSSFGVDK (77 aa)) is disordered. Residues 732 to 743 (SKVDPNKPDRPG) show a composition bias toward basic and acidic residues. The segment covering 744-760 (TSKSTRTSPPSSVSPVS) has biased composition (low complexity). A compositionally biased stretch (polar residues) spans 769 to 783 (TPVSRSDSGFALTST). The span at 784-797 (LREKRSRNFDEKTR) shows a compositional bias: basic and acidic residues. The segment at 883–931 (GHCFNWEEGALSSSCSVCDDRAEGDGIYKCSGCSAFAHGRCLGCVSLAC) adopts a Phorbol-ester/DAG-type zinc-finger fold. The interval 1121–1146 (PRPEQRGTRGLVRKQVPSMLGTSPTN) is disordered.

It belongs to the EPD1 elicitor family. Interacts with host cotton EIR5A (AC A0A5J5T2N2) and EIR5D (AC A0A5J5NT52) and host N.benthamiana EIR (AC P0DXJ0).

It is found in the secreted. The protein resides in the host cell. Acts as an elicitor that triggers defense responses in both Nicotiana benthamiana and cotton plants. Triggers the accumulation of reactive oxygen species (ROS) and the activation of cell death in cotton plants. Induces significantly enhanced resistance of Nicotiana benthamiana to both the broad-host-range filamentous pathogen Botrytis cinerea and the semibiotrophic pathogen Phytophthora capsici. Stimulates the expression of EIR5A (AC A0A5J5T2N2) and EIR5D (AC A0A5J5NT52) in cotton plants and recognition of EPD1 potentiates EIRs to enhance cotton PAMP-triggered immunity (PTI). The chain is Elicitor of plant defense protein 1 from Verticillium dahliae (strain VdLs.17 / ATCC MYA-4575 / FGSC 10137) (Verticillium wilt).